A 151-amino-acid polypeptide reads, in one-letter code: Ubiquitin-conjugating enzyme E2 W (151 aa).

A Peptide (Met-Gly) (interchain with G-Cter in ubiquitin) cross-link involves residue methionine 1. A UBC core domain is found at 3–151 (SMQKRLQKEL…TKWWYHDDTC (149 aa)). Catalysis depends on cysteine 91, which acts as the Glycyl thioester intermediate.

Belongs to the ubiquitin-conjugating enzyme family. As to quaternary structure, homodimer. Interacts with FANCL. Interacts with STUB1/CHIP. Autoubiquitinated at Met-1.

The protein resides in the nucleus. The catalysed reaction is S-ubiquitinyl-[E1 ubiquitin-activating enzyme]-L-cysteine + [E2 ubiquitin-conjugating enzyme]-L-cysteine = [E1 ubiquitin-activating enzyme]-L-cysteine + S-ubiquitinyl-[E2 ubiquitin-conjugating enzyme]-L-cysteine.. The enzyme catalyses S-ubiquitinyl-[E1 ubiquitin-activating enzyme]-L-cysteine + [acceptor protein]-N-terminal-amino acid = [E1 ubiquitin-activating enzyme]-L-cysteine + N-terminal-ubiquitinyl-[acceptor protein].. It participates in protein modification; protein ubiquitination. Accepts ubiquitin from the E1 complex and catalyzes its covalent attachment to other proteins. Specifically monoubiquitinates the N-terminus of various substrates, including ATXN3, MAPT/TAU, POLR2H/RPB8 and STUB1/CHIP, by recognizing backbone atoms of disordered N-termini. Involved in degradation of misfolded chaperone substrates by mediating monoubiquitination of STUB1/CHIP, leading to recruitment of ATXN3 to monoubiquitinated STUB1/CHIP, and restriction of the length of ubiquitin chain attached to STUB1/CHIP substrates by ATXN3. After UV irradiation, but not after mitomycin-C (MMC) treatment, acts as a specific E2 ubiquitin-conjugating enzyme for the Fanconi anemia complex by associating with E3 ubiquitin-protein ligase FANCL and catalyzing monoubiquitination of FANCD2, a key step in the DNA damage pathway. In vitro catalyzes 'Lys-11'-linked polyubiquitination. UBE2W-catalyzed ubiquitination also occurs in the presence of inactive RING/U-box type E3s, i.e. lacking the active site cysteine residues to form thioester bonds with ubiquitin, or even in the absence of E3, albeit at a slower rate. The polypeptide is Ubiquitin-conjugating enzyme E2 W (Ube2w) (Mus musculus (Mouse)).